We begin with the raw amino-acid sequence, 109 residues long: Aquaporin-2 (109 aa).

Residues 1–6 (SIAFSR) lie on the Cytoplasmic side of the membrane. Residues 7–27 (AVFSEFLATLLFVFFGLGSAL) form a helical membrane-spanning segment. The Extracellular portion of the chain corresponds to 28–35 (NWPQALPS). A helical membrane pass occupies residues 36 to 54 (VLQIAMAFGLAIGTLVQTL). The Cytoplasmic portion of the chain corresponds to 55 to 59 (GHISG). The discontinuously helical intramembrane region spans 60–69 (AHINPAVTVA). Residues 63–65 (NPA) carry the NPA 1 motif. At 70–80 (CLVGCHVSFLR) the chain is on the cytoplasmic side. A helical transmembrane segment spans residues 81–102 (ATFYVAAQLLGAVAGAALLHEL). Over 103–109 (TPPDIRG) the chain is Extracellular.

Belongs to the MIP/aquaporin (TC 1.A.8) family. In terms of assembly, homotetramer. Serine phosphorylation is necessary and sufficient for expression at the apical membrane. Endocytosis is not phosphorylation-dependent. Post-translationally, N-glycosylated.

The protein localises to the apical cell membrane. Its subcellular location is the basolateral cell membrane. It localises to the cell membrane. The protein resides in the cytoplasmic vesicle membrane. It is found in the golgi apparatus. The protein localises to the trans-Golgi network membrane. The enzyme catalyses H2O(in) = H2O(out). It carries out the reaction glycerol(in) = glycerol(out). Its function is as follows. Forms a water-specific channel that provides the plasma membranes of renal collecting duct with high permeability to water, thereby permitting water to move in the direction of an osmotic gradient. Plays an essential role in renal water homeostasis. Could also be permeable to glycerol. This Amblysomus hottentotus (Hottentot golden mole) protein is Aquaporin-2.